We begin with the raw amino-acid sequence, 134 residues long: Transcription factor atoh7 (134 aa).

The segment at 1 to 27 is disordered; it reads MKPRRPSCADSGSDSDSRDPEKFESAM. Basic and acidic residues predominate over residues 15 to 27; that stretch reads SDSRDPEKFESAM. Positions 28–80 constitute a bHLH domain; it reads RRRMAANARERKRMQGLNTAFDRLRKVVPQWGQDKKLSKYETLQMALSYIMAL.

The protein localises to the nucleus. It localises to the perikaryon. Its subcellular location is the cell projection. The protein resides in the axon. In terms of biological role, transcription factor that binds to DNA at the consensus sequence 5'-CAG[GC]TG-3'. Involved in the differentiation of retinal ganglion cells, photoreceptor population and optic nerve development. Required for retinal circadian rhythm photoentrainment. This chain is Transcription factor atoh7, found in Danio rerio (Zebrafish).